A 225-amino-acid polypeptide reads, in one-letter code: Methylthioribulose-1-phosphate dehydratase (225 aa).

Histidine 106 and histidine 108 together coordinate Zn(2+).

The protein belongs to the aldolase class II family. MtnB subfamily. It depends on Zn(2+) as a cofactor.

It carries out the reaction 5-(methylsulfanyl)-D-ribulose 1-phosphate = 5-methylsulfanyl-2,3-dioxopentyl phosphate + H2O. It participates in amino-acid biosynthesis; L-methionine biosynthesis via salvage pathway; L-methionine from S-methyl-5-thio-alpha-D-ribose 1-phosphate: step 2/6. Catalyzes the dehydration of methylthioribulose-1-phosphate (MTRu-1-P) into 2,3-diketo-5-methylthiopentyl-1-phosphate (DK-MTP-1-P). The polypeptide is Methylthioribulose-1-phosphate dehydratase (Xanthomonas oryzae pv. oryzae (strain KACC10331 / KXO85)).